A 543-amino-acid chain; its full sequence is MLVKPMACYFEIWTRKVTTIEDFSLAIANRFKQMGSHSDSEVDWDNEEEVWEDEVHEFCCLFCDSTFTCLKDLWSHCKEAHNFDFYQVKQQNNLDFYACIKLVNYIRSQVKEGKTPDLDKLSDILRSDEYMISVLPDDSVLFSLGDELDSDFEDDNTLEIEVENPADVSKDAEIKKLKLQNQLLISQLEEIRKDKMNELTSQTTDQLSVTPKKADNDSYYFESYAGNDIHFLMLNDSVRTEGYRDFVYHNKHIFAGKTVLDVGCGTGILSMFCAKAGAKKVYAVDNSDIIQMAISNAFENGLADQITFIRGKIEDISLPVGKVDIIISEWMGYALTFESMIDSVLVARDRFLAPSGIMAPSETRLVLTATTNTELLEEPIDFWSDVYGFKMNGMKDASYKGVSVQVVPQTYVNAKPVVFARFNMHTCKVQDVSFTSPFSLIIDNEGPLCAFTLWFDTYFTTKRTQPIPEAIDEACGFTTGPQGTPTHWKQCVLLLRNRPFLQKGTRVEGTISFSKNKKNNRDLDISVHWNVNGKADSQSYVLN.

The segment at 58 to 81 (FCCLFCDSTFTCLKDLWSHCKEAH) adopts a C2H2-type zinc-finger fold. In terms of domain architecture, SAM-dependent MTase PRMT-type spans 217–543 (DSYYFESYAG…KADSQSYVLN (327 aa)). Positions 239, 263, 285, 287, 313, and 314 each coordinate S-adenosyl-L-homocysteine. Active-site residues include Glu329 and Glu338.

Belongs to the class I-like SAM-binding methyltransferase superfamily. Protein arginine N-methyltransferase family. As to quaternary structure, interacts with ef1a-c, rps2 and rps24. Note=Associates with the 40S ribosomal particle.

Its subcellular location is the cytoplasm. It localises to the cytosol. The catalysed reaction is L-arginyl-[protein] + S-adenosyl-L-methionine = N(omega)-methyl-L-arginyl-[protein] + S-adenosyl-L-homocysteine + H(+). It catalyses the reaction L-arginyl-[protein] + 2 S-adenosyl-L-methionine = N(omega),N(omega)-dimethyl-L-arginyl-[protein] + 2 S-adenosyl-L-homocysteine + 2 H(+). Methylates (mono and asymmetric dimethylation) the guanidino nitrogens of arginyl residues in ribosomal protein rps2. This Schizosaccharomyces pombe (strain 972 / ATCC 24843) (Fission yeast) protein is Ribosomal protein arginine N-methyltransferase rmt3 (rmt3).